The sequence spans 216 residues: Octanoyltransferase (216 aa).

A BPL/LPL catalytic domain is found at 30 to 204 (KNNINEIWLL…NCKKFLMMNN (175 aa)). Substrate is bound by residues 68-75 (RGGHMTFH), 135-137 (SIG), and 148-150 (GLA). Cys-166 functions as the Acyl-thioester intermediate in the catalytic mechanism.

This sequence belongs to the LipB family.

Its subcellular location is the cytoplasm. The catalysed reaction is octanoyl-[ACP] + L-lysyl-[protein] = N(6)-octanoyl-L-lysyl-[protein] + holo-[ACP] + H(+). Its pathway is protein modification; protein lipoylation via endogenous pathway; protein N(6)-(lipoyl)lysine from octanoyl-[acyl-carrier-protein]: step 1/2. Functionally, catalyzes the transfer of endogenously produced octanoic acid from octanoyl-acyl-carrier-protein onto the lipoyl domains of lipoate-dependent enzymes. Lipoyl-ACP can also act as a substrate although octanoyl-ACP is likely to be the physiological substrate. This is Octanoyltransferase from Wigglesworthia glossinidia brevipalpis.